Reading from the N-terminus, the 217-residue chain is Probable transaldolase (217 aa).

The active-site Schiff-base intermediate with substrate is the lysine 85.

Belongs to the transaldolase family. Type 3B subfamily.

The protein resides in the cytoplasm. It catalyses the reaction D-sedoheptulose 7-phosphate + D-glyceraldehyde 3-phosphate = D-erythrose 4-phosphate + beta-D-fructose 6-phosphate. Its pathway is carbohydrate degradation; pentose phosphate pathway; D-glyceraldehyde 3-phosphate and beta-D-fructose 6-phosphate from D-ribose 5-phosphate and D-xylulose 5-phosphate (non-oxidative stage): step 2/3. Its function is as follows. Transaldolase is important for the balance of metabolites in the pentose-phosphate pathway. The protein is Probable transaldolase of Lachnoclostridium phytofermentans (strain ATCC 700394 / DSM 18823 / ISDg) (Clostridium phytofermentans).